The primary structure comprises 104 residues: Putative membrane protein insertion efficiency factor (104 aa).

The disordered stretch occupies residues 83–104 (SSPTPLAESPDDRTVPHTQETS).

This sequence belongs to the UPF0161 family.

It localises to the cell inner membrane. Could be involved in insertion of integral membrane proteins into the membrane. This chain is Putative membrane protein insertion efficiency factor, found in Chlamydia trachomatis serovar D (strain ATCC VR-885 / DSM 19411 / UW-3/Cx).